Reading from the N-terminus, the 761-residue chain is Protein ACTIVITY OF BC1 COMPLEX KINASE 8, chloroplastic (761 aa).

A chloroplast-targeting transit peptide spans 1–57 (MATSSSSSSSLLLPNINFNSRQSPTITRSVSIAGIFLPRNRLSYNHNLRIRTRLIRA). The region spanning 288-648 (RFDYEPIAAA…VKDLRKRWDR (361 aa)) is the Protein kinase domain. Residues 294-302 (IAAASLGQV) and K315 contribute to the ATP site. D452 acts as the Proton acceptor in catalysis. The chain crosses the membrane as a helical span at residues 725–745 (PATIAYTVCAFFSLQVLIGII).

This sequence belongs to the protein kinase superfamily. ADCK protein kinase family. Mostly expressed in leaves and flowers, and, to a lower extent, in stems, siliques and roots.

The protein localises to the plastid. It is found in the chloroplast envelope. The protein resides in the chloroplast membrane. The catalysed reaction is L-seryl-[protein] + ATP = O-phospho-L-seryl-[protein] + ADP + H(+). The enzyme catalyses L-threonyl-[protein] + ATP = O-phospho-L-threonyl-[protein] + ADP + H(+). In terms of biological role, involved in resistance to oxidative stress (e.g. hydrogen peroxide H(2)O(2)), high light and heavy metals (e.g. cadmium ions Cd(2+)). Influences responses to reactive oxygen species (ROS) production. Together with SIA1, regulates iron distribution within the chloroplast and mediates the oxidative stress response. Together with ABC1K7, influences chloroplast lipid synthesis/accumulation and modulates chloroplast membrane composition in response to stress. This chain is Protein ACTIVITY OF BC1 COMPLEX KINASE 8, chloroplastic, found in Arabidopsis thaliana (Mouse-ear cress).